Consider the following 126-residue polypeptide: Nascent polypeptide-associated complex protein (126 aa).

Residues 10-77 enclose the NAC-A/B domain; that stretch reads PRMMKQMQKM…AKKVAKAEEK (68 aa).

This sequence belongs to the NAC-alpha family. Homodimer. Interacts with the ribosome. Binds ribosomal RNA.

Functionally, contacts the emerging nascent chain on the ribosome. The sequence is that of Nascent polypeptide-associated complex protein from Methanococcus maripaludis (strain C5 / ATCC BAA-1333).